A 115-amino-acid polypeptide reads, in one-letter code: Nucleoid-associated protein P9211_00201 (115 aa).

Belongs to the YbaB/EbfC family. Homodimer.

Its subcellular location is the cytoplasm. The protein resides in the nucleoid. In terms of biological role, binds to DNA and alters its conformation. May be involved in regulation of gene expression, nucleoid organization and DNA protection. In Prochlorococcus marinus (strain MIT 9211), this protein is Nucleoid-associated protein P9211_00201.